Reading from the N-terminus, the 425-residue chain is Enolase (425 aa).

Residue Gln162 coordinates (2R)-2-phosphoglycerate. The Proton donor role is filled by Glu204. Residues Asp241, Glu284, and Asp311 each contribute to the Mg(2+) site. (2R)-2-phosphoglycerate is bound by residues Lys336, Arg365, Ser366, and Lys387. The Proton acceptor role is filled by Lys336.

This sequence belongs to the enolase family. Mg(2+) is required as a cofactor.

It localises to the cytoplasm. It is found in the secreted. Its subcellular location is the cell surface. The catalysed reaction is (2R)-2-phosphoglycerate = phosphoenolpyruvate + H2O. It functions in the pathway carbohydrate degradation; glycolysis; pyruvate from D-glyceraldehyde 3-phosphate: step 4/5. Its function is as follows. Catalyzes the reversible conversion of 2-phosphoglycerate (2-PG) into phosphoenolpyruvate (PEP). It is essential for the degradation of carbohydrates via glycolysis. This is Enolase from Brucella ovis (strain ATCC 25840 / 63/290 / NCTC 10512).